The primary structure comprises 152 residues: Mitochondrial fission 1 protein (152 aa).

Residue M1 is modified to N-acetylmethionine. Residues M1 to G122 lie on the Cytoplasmic side of the membrane. The residue at position 10 (S10) is a Phosphoserine. One copy of the TPR repeat lies at R71 to N104. Residues L123 to I143 form a helical membrane-spanning segment. At G144–S152 the chain is on the mitochondrial intermembrane side.

It belongs to the FIS1 family. In terms of assembly, interacts with DNM1L/DLP1 through the TPR region; may form part of a larger protein complex at the endoplasmic reticulum-mitochondrial interface during mitochondrial fission. Interacts with MARCHF5. Interacts with MIEF1. Interacts with PEX11A, PEX11B and PEX11G. Ubiquitinated by MARCHF5.

The protein localises to the mitochondrion outer membrane. It localises to the peroxisome membrane. Its function is as follows. Involved in the fragmentation of the mitochondrial network and its perinuclear clustering. Plays a minor role in the recruitment and association of the fission mediator dynamin-related protein 1 (DNM1L) to the mitochondrial surface and mitochondrial fission. May not be essential for the assembly of functional fission complexes and the subsequent membrane scission event. Also mediates peroxisomal fission. May act when the products of fission are directed toward mitochondrial homeostasis, mitophagy, or apoptosis. Can induce cytochrome c release from the mitochondrion to the cytosol, ultimately leading to apoptosis. In Mus musculus (Mouse), this protein is Mitochondrial fission 1 protein (Fis1).